The following is a 57-amino-acid chain: uncharacterized protein (57 aa).

A helical membrane pass occupies residues 34–54 (AALLDAAALVVIPGLLTVAAV).

It is found in the membrane. This is an uncharacterized protein from Dictyostelium discoideum (Social amoeba).